Here is a 183-residue protein sequence, read N- to C-terminus: Capsid protein (183 aa).

The disordered stretch occupies residues 143-183 (LPETTVVRRRGRSPRRRTPSPRRRRSQSPRRRRSQSRESQC). The span at 149-176 (VRRRGRSPRRRTPSPRRRRSQSPRRRRS) shows a compositional bias: basic residues. Serine 155, serine 162, and serine 170 each carry phosphoserine; by host. The 1; half-length repeat unit spans residues 155–161 (SPRRRTP). The 3 X 8 AA repeats of S-P-R-R-R-[PR]-S-Q stretch occupies residues 155–177 (SPRRRTPSPRRRRSQSPRRRRSQ). The Bipartite nuclear localization signal signature appears at 158 to 175 (RRTPSPRRRRSQSPRRRR). 2 repeat units span residues 162-169 (SPRRRRSQ) and 170-177 (SPRRRRSQ). The tract at residues 177–183 (QSRESQC) is RNA binding.

Belongs to the orthohepadnavirus core antigen family. In terms of assembly, homodimerizes, then multimerizes. Interacts with cytosol exposed regions of viral L glycoprotein present in the reticulum-to-Golgi compartment. Interacts with human FLNB. Phosphorylated form interacts with host importin alpha; this interaction depends on the exposure of the NLS, which itself depends upon genome maturation and/or phosphorylation of the capsid protein. Interacts with host NUP153. In terms of processing, phosphorylated by host SRPK1, SRPK2, and maybe protein kinase C or GAPDH. Phosphorylation is critical for pregenomic RNA packaging. Protein kinase C phosphorylation is stimulated by HBx protein and may play a role in transport of the viral genome to the nucleus at the late step during the viral replication cycle.

It is found in the virion. The protein localises to the host cytoplasm. Its function is as follows. Self assembles to form an icosahedral capsid. Most capsids appear to be large particles with an icosahedral symmetry of T=4 and consist of 240 copies of capsid protein, though a fraction forms smaller T=3 particles consisting of 180 capsid proteins. Entering capsids are transported along microtubules to the nucleus. Phosphorylation of the capsid is thought to induce exposure of nuclear localization signal in the C-terminal portion of the capsid protein that allows binding to the nuclear pore complex via the importin (karyopherin-) alpha and beta. Capsids are imported in intact form through the nuclear pore into the nuclear basket, where it probably binds NUP153. Only capsids that contain the mature viral genome can release the viral DNA and capsid protein into the nucleoplasm. Immature capsids get stuck in the basket. Capsids encapsulate the pre-genomic RNA and the P protein. Pre-genomic RNA is reverse-transcribed into DNA while the capsid is still in the cytoplasm. The capsid can then either be directed to the nucleus, providing more genomes for transcription, or bud through the endoplasmic reticulum to provide new virions. The protein is Capsid protein of Homo sapiens (Human).